We begin with the raw amino-acid sequence, 1593 residues long: THO complex subunit 2 (1593 aa).

Positions 1 to 163 (MAAAAVVVPA…KLFYKQQKFN (163 aa)) are anchor domain; interaction with THOC5 and THOC7. The segment at 164–534 (LLREENEGYA…GQWKNETYNS (371 aa)) is bow domain; interaction with THOC1 dock domain and THOC3. Residues 322–341 (KMDEREKEKEKEEEKVEKPP) are disordered. An MIF4G domain; interaction with THOC3 and DDX39B region spans residues 535-686 (HPLLVKVKAQ…LILKEVVQKM (152 aa)). The tract at residues 687 to 1174 (AGIEITEEMT…LAMGYSGQLK (488 aa)) is stern domain. The stretch at 896 to 965 (HTSYEREVNK…LKLEKDNWLL (70 aa)) forms a coiled coil. Positions 923-928 (KKKKEK) match the Nuclear localization signal motif. The tract at residues 1175 to 1593 (SRKSYMIPEN…KHHKSSDKHR (419 aa)) is charged domain. Residues 1184 to 1593 (NEFHHKDPPP…KHHKSSDKHR (410 aa)) are disordered. Positions 1218–1234 (KSDESSTEETDKSRERS) are enriched in basic and acidic residues. At serine 1222 the chain carries Phosphoserine. A compositionally biased stretch (low complexity) spans 1251–1263 (GNSSNGNSGSNSN). 3 stretches are compositionally biased toward basic and acidic residues: residues 1265–1285 (AVKENDKEKGKEKEKEKKEKT), 1294–1343 (VLGK…EKFK), and 1353–1383 (STQEREREKEPSRERDIAKEMKSKENVKGGE). At threonine 1385 the chain carries Phosphothreonine. 3 positions are modified to phosphoserine: serine 1390, serine 1393, and serine 1417. Residues 1416–1425 (PSPSHSSTVK) show a composition bias toward polar residues. A Phosphothreonine modification is found at threonine 1443. Residues 1449–1504 (KSKEREMDKKDLDKSRERSREREKKDEKDRKERKRDHSNNDREVPPDLTKRRKEEN) show a composition bias toward basic and acidic residues. A phosphoserine mark is found at serine 1450, serine 1486, and serine 1516. Residues 1524-1582 (NEKDKEKNKSKSSGKEKGSDSFKSEKMDKISSGGKKESRHDKEKIEKKEKRDSSGGKEE) show a composition bias toward basic and acidic residues. A compositionally biased stretch (basic residues) spans 1583 to 1593 (KKHHKSSDKHR).

This sequence belongs to the THOC2 family. Component of the THO subcomplex, which is composed of THOC1, THOC2, THOC3, THOC5, THOC6 and THOC7. The THO subcomplex interacts with DDX39B to form the THO-DDX39B complex which multimerizes into a 28-subunit tetrameric assembly. Component of the transcription/export (TREX) complex at least composed of ALYREF/THOC4, DDX39B, SARNP/CIP29, CHTOP and the THO subcomplex; in the complex interacts with THOC1, THOC3, THOC5, THOC7 and DDX39B. TREX seems to have a dynamic structure involving ATP-dependent remodeling. Interacts with POLDIP3 and ZC3H11A. As to expression, expressed in the hippocampus and the cerebral cortex.

It localises to the nucleus. The protein resides in the nucleus speckle. Its subcellular location is the cytoplasm. Functionally, component of the THO subcomplex of the TREX complex which is thought to couple mRNA transcription, processing and nuclear export, and which specifically associates with spliced mRNA and not with unspliced pre-mRNA. Required for efficient export of polyadenylated RNA and spliced mRNA. The THOC1-THOC2-THOC3 core complex alone is sufficient to bind export factor NXF1-NXT1 and promote ATPase activity of DDX39B; in the complex THOC2 is the only component that directly interacts with DDX39B. TREX is recruited to spliced mRNAs by a transcription-independent mechanism, binds to mRNA upstream of the exon-junction complex (EJC) and is recruited in a splicing- and cap-dependent manner to a region near the 5' end of the mRNA where it functions in mRNA export to the cytoplasm via the TAP/NXF1 pathway. Required for NXF1 localization to the nuclear rim. THOC2 (and probably the THO complex) is involved in releasing mRNA from nuclear speckle domains. In terms of biological role, (Microbial infection) The TREX complex is essential for the export of Kaposi's sarcoma-associated herpesvirus (KSHV) intronless mRNAs and infectious virus production. This Homo sapiens (Human) protein is THO complex subunit 2 (THOC2).